The following is a 115-amino-acid chain: UPF0102 protein NMB2089 (115 aa).

This sequence belongs to the UPF0102 family.

The sequence is that of UPF0102 protein NMB2089 from Neisseria meningitidis serogroup B (strain ATCC BAA-335 / MC58).